The following is a 444-amino-acid chain: Xylose isomerase (444 aa).

Active-site residues include His101 and Asp104. Positions 232, 268, 271, 296, 307, 309, and 339 each coordinate Mg(2+).

This sequence belongs to the xylose isomerase family. As to quaternary structure, homotetramer. Mg(2+) serves as cofactor.

It localises to the cytoplasm. The enzyme catalyses alpha-D-xylose = alpha-D-xylulofuranose. This chain is Xylose isomerase, found in Thermotoga petrophila (strain ATCC BAA-488 / DSM 13995 / JCM 10881 / RKU-1).